The chain runs to 115 residues: Cholecystokinin (115 aa).

An N-terminal signal peptide occupies residues 1-20 (MKSGVCLCVVMAVLAAGALA). The propeptide occupies 21 to 70 (QPVVPAEATDPVEQRAQEAPRRQLRAVLRTDGEPRARLGALLARYIQQVR). At Tyr97 the chain carries Sulfotyrosine. The residue at position 103 (Phe103) is a Phenylalanine amide. Residues 107-115 (SAEDYEYPS) constitute a propeptide that is removed on maturation. Sulfotyrosine occurs at positions 111 and 113.

The protein belongs to the gastrin/cholecystokinin family. As to quaternary structure, binds to CCK-A receptors in the pancreas and CCK-B receptors in the brain. Post-translationally, the precursor is cleaved by proteases to produce a number of active cholecystokinins. In terms of tissue distribution, expressed and secreted by discrete enteroendocrine cells that reside as single cells scattered among enterocytes in the mucosa of the small intestine. Released into the blood following ingestion of a meal.

It is found in the secreted. Its function is as follows. This peptide hormone induces gall bladder contraction and the release of pancreatic enzymes in the gut. Its function in the brain is not clear. Binding to CCK-A receptors stimulates amylase release from the pancreas, binding to CCK-B receptors stimulates gastric acid secretion. The sequence is that of Cholecystokinin (Cck) from Mus musculus (Mouse).